A 143-amino-acid chain; its full sequence is Large ribosomal subunit protein uL13 (143 aa).

This sequence belongs to the universal ribosomal protein uL13 family. As to quaternary structure, part of the 50S ribosomal subunit.

In terms of biological role, this protein is one of the early assembly proteins of the 50S ribosomal subunit, although it is not seen to bind rRNA by itself. It is important during the early stages of 50S assembly. The protein is Large ribosomal subunit protein uL13 of Desulfitobacterium hafniense (strain Y51).